A 357-amino-acid chain; its full sequence is Dual-specificity RNA methyltransferase RlmN (357 aa).

The active-site Proton acceptor is glutamate 89. Positions 109–340 (EGEKYTVCVS…CTIRESKALD (232 aa)) constitute a Radical SAM core domain. Cysteine 116 and cysteine 345 are oxidised to a cystine. Residues cysteine 123, cysteine 127, and cysteine 130 each coordinate [4Fe-4S] cluster. S-adenosyl-L-methionine contacts are provided by residues 173–174 (GE), serine 203, 226–228 (SLH), and asparagine 302. Cysteine 345 serves as the catalytic S-methylcysteine intermediate.

It belongs to the radical SAM superfamily. RlmN family. It depends on [4Fe-4S] cluster as a cofactor.

It localises to the cytoplasm. It catalyses the reaction adenosine(2503) in 23S rRNA + 2 reduced [2Fe-2S]-[ferredoxin] + 2 S-adenosyl-L-methionine = 2-methyladenosine(2503) in 23S rRNA + 5'-deoxyadenosine + L-methionine + 2 oxidized [2Fe-2S]-[ferredoxin] + S-adenosyl-L-homocysteine. It carries out the reaction adenosine(37) in tRNA + 2 reduced [2Fe-2S]-[ferredoxin] + 2 S-adenosyl-L-methionine = 2-methyladenosine(37) in tRNA + 5'-deoxyadenosine + L-methionine + 2 oxidized [2Fe-2S]-[ferredoxin] + S-adenosyl-L-homocysteine. Functionally, specifically methylates position 2 of adenine 2503 in 23S rRNA and position 2 of adenine 37 in tRNAs. m2A2503 modification seems to play a crucial role in the proofreading step occurring at the peptidyl transferase center and thus would serve to optimize ribosomal fidelity. The protein is Dual-specificity RNA methyltransferase RlmN of Helicobacter pylori (strain HPAG1).